The sequence spans 298 residues: MDQKQIEEIVRSVMASMGQDVPQPAAPSTQEGAKPQCAVPTVAESCALDLGSAEAKAWIGVENPHRADVLTELRRSTAARVCTGRAGPRPRTQALLRFLADHSRSKDTVLKEVPEEWVKAQGLLEVRSEISDKNLYLTRPDMGRRLSPEAIDALKSQCVMNPDVQVVVSDGLSTDAITANYEEILPPLLAGLKQAGLNVGTPFFVRYGRVKIEDQIGEILGAKVVILLVGERPGLGQSESLSCYAVYSPRVATTVEADRTCISNIHQGGTPPVEAAAVIVDLAKRMLEQKASGINMTR.

Adenosylcob(III)alamin is bound by residues V210, E231, and C261.

The protein belongs to the EutC family. As to quaternary structure, the basic unit is a heterodimer which dimerizes to form tetramers. The heterotetramers trimerize; 6 large subunits form a core ring with 6 small subunits projecting outwards. Adenosylcob(III)alamin is required as a cofactor.

It localises to the bacterial microcompartment. The catalysed reaction is ethanolamine = acetaldehyde + NH4(+). The protein operates within amine and polyamine degradation; ethanolamine degradation. Functionally, catalyzes the deamination of various vicinal amino-alcohols to oxo compounds. Allows this organism to utilize ethanolamine as the sole source of nitrogen and carbon in the presence of external vitamin B12. In Salmonella schwarzengrund (strain CVM19633), this protein is Ethanolamine ammonia-lyase small subunit.